The chain runs to 366 residues: Dihydroflavonol 4-reductase (366 aa).

Lys45 and Tyr164 together coordinate NADP(+).

Belongs to the NAD(P)-dependent epimerase/dehydratase family. Dihydroflavonol-4-reductase subfamily.

It catalyses the reaction a (2R,3S,4S)-leucoanthocyanidin + NADP(+) = a (2R,3R)-dihydroflavonol + NADPH + H(+). It carries out the reaction (2S)-flavan-4-ol + NADP(+) = (2S)-flavanone + NADPH + H(+). It functions in the pathway pigment biosynthesis; anthocyanin biosynthesis. Functionally, bifunctional enzyme involved in flavonoid metabolism. The sequence is that of Dihydroflavonol 4-reductase (DFR) from Gerbera hybrida (Daisy).